Reading from the N-terminus, the 168-residue chain is Crossover junction endodeoxyribonuclease RuvC (168 aa).

Residues D9, E69, and D141 contribute to the active site. D9, E69, and D141 together coordinate Mg(2+).

Belongs to the RuvC family. As to quaternary structure, homodimer which binds Holliday junction (HJ) DNA. The HJ becomes 2-fold symmetrical on binding to RuvC with unstacked arms; it has a different conformation from HJ DNA in complex with RuvA. In the full resolvosome a probable DNA-RuvA(4)-RuvB(12)-RuvC(2) complex forms which resolves the HJ. The cofactor is Mg(2+).

It localises to the cytoplasm. The catalysed reaction is Endonucleolytic cleavage at a junction such as a reciprocal single-stranded crossover between two homologous DNA duplexes (Holliday junction).. In terms of biological role, the RuvA-RuvB-RuvC complex processes Holliday junction (HJ) DNA during genetic recombination and DNA repair. Endonuclease that resolves HJ intermediates. Cleaves cruciform DNA by making single-stranded nicks across the HJ at symmetrical positions within the homologous arms, yielding a 5'-phosphate and a 3'-hydroxyl group; requires a central core of homology in the junction. The consensus cleavage sequence is 5'-(A/T)TT(C/G)-3'. Cleavage occurs on the 3'-side of the TT dinucleotide at the point of strand exchange. HJ branch migration catalyzed by RuvA-RuvB allows RuvC to scan DNA until it finds its consensus sequence, where it cleaves and resolves the cruciform DNA. The sequence is that of Crossover junction endodeoxyribonuclease RuvC from Bdellovibrio bacteriovorus (strain ATCC 15356 / DSM 50701 / NCIMB 9529 / HD100).